The primary structure comprises 613 residues: Kelch-like protein 36 (613 aa).

The 68-residue stretch at 45-112 (CDVVLVVEEQ…LYSSELELDG (68 aa)) folds into the BTB domain. One can recognise a BACK domain in the interval 147–249 (YLYLQELASI…PEDILLQRVK (103 aa)). 6 Kelch repeats span residues 294–343 (CLLF…VLGG), 344–395 (FIFV…SIED), 396–442 (MLVA…IYKD), 444–491 (VYIS…SLGD), 492–544 (SIYS…VWQG), and 545–593 (RIYI…VCAL).

As to quaternary structure, interacts with CUL3.

It functions in the pathway protein modification; protein ubiquitination. Functionally, probable substrate-specific adapter of an E3 ubiquitin-protein ligase complex which mediates the ubiquitination and subsequent proteasomal degradation of target proteins. In Rattus norvegicus (Rat), this protein is Kelch-like protein 36 (Klhl36).